The chain runs to 130 residues: D-ribose pyranase (130 aa).

The Proton donor role is filled by His20. Substrate contacts are provided by residues Asp28, His97, and 119 to 121 (YAN).

This sequence belongs to the RbsD / FucU family. RbsD subfamily. In terms of assembly, homodecamer.

It is found in the cytoplasm. The catalysed reaction is beta-D-ribopyranose = beta-D-ribofuranose. The protein operates within carbohydrate metabolism; D-ribose degradation; D-ribose 5-phosphate from beta-D-ribopyranose: step 1/2. Functionally, catalyzes the interconversion of beta-pyran and beta-furan forms of D-ribose. The protein is D-ribose pyranase of Heliobacterium modesticaldum (strain ATCC 51547 / Ice1).